We begin with the raw amino-acid sequence, 246 residues long: DNA polymerase sliding clamp (246 aa).

It belongs to the PCNA family. In terms of assembly, homotrimer. The subunits circularize to form a toroid; DNA passes through its center. Replication factor C (RFC) is required to load the toroid on the DNA.

Sliding clamp subunit that acts as a moving platform for DNA processing. Responsible for tethering the catalytic subunit of DNA polymerase and other proteins to DNA during high-speed replication. This chain is DNA polymerase sliding clamp, found in Thermoplasma acidophilum (strain ATCC 25905 / DSM 1728 / JCM 9062 / NBRC 15155 / AMRC-C165).